The sequence spans 376 residues: Spermidine/putrescine import ATP-binding protein PotA (376 aa).

The region spanning 6–236 (INIVNVNKSF…PADTFVADFL (231 aa)) is the ABC transporter domain. 38 to 45 (GPSGCGKT) is an ATP binding site.

The protein belongs to the ABC transporter superfamily. Spermidine/putrescine importer (TC 3.A.1.11.1) family. The complex is composed of two ATP-binding proteins (PotA), two transmembrane proteins (PotB and PotC) and a solute-binding protein (PotD).

The protein localises to the cell inner membrane. The enzyme catalyses ATP + H2O + polyamine-[polyamine-binding protein]Side 1 = ADP + phosphate + polyamineSide 2 + [polyamine-binding protein]Side 1.. In terms of biological role, part of the ABC transporter complex PotABCD involved in spermidine/putrescine import. Responsible for energy coupling to the transport system. In Fusobacterium nucleatum subsp. nucleatum (strain ATCC 25586 / DSM 15643 / BCRC 10681 / CIP 101130 / JCM 8532 / KCTC 2640 / LMG 13131 / VPI 4355), this protein is Spermidine/putrescine import ATP-binding protein PotA.